A 248-amino-acid polypeptide reads, in one-letter code: MKVVFLRHGESIWNRENRFTGWTDVDLSSRGIEEAENAARLLKEEGFEFDVAFCSVLKRAIRTLWIVLDKMDRMWIPVEKSWRLNERHYGALQGLNKSEMAKKYGEEQVLLWRRSYDIVPPRLENDDPRHPRFDPRYRSLPADELPAAESLKDTLERTVPYWKERIFPAILSGQKVLVSAHGNSIRALIKYIENMSEKEIVGLNIPTGFPLVYDLDEQGNKLACYYLGDLEEIEKAQHRVAAQGKASS.

Substrate-binding positions include 7 to 14 (RHGESIWN), 20 to 21 (TG), R59, 86 to 89 (ERHY), K97, 113 to 114 (RR), and 182 to 183 (GN). The Tele-phosphohistidine intermediate role is filled by H8. Catalysis depends on E86, which acts as the Proton donor/acceptor.

It belongs to the phosphoglycerate mutase family. BPG-dependent PGAM subfamily.

It carries out the reaction (2R)-2-phosphoglycerate = (2R)-3-phosphoglycerate. It functions in the pathway carbohydrate degradation; glycolysis; pyruvate from D-glyceraldehyde 3-phosphate: step 3/5. Catalyzes the interconversion of 2-phosphoglycerate and 3-phosphoglycerate. The sequence is that of 2,3-bisphosphoglycerate-dependent phosphoglycerate mutase from Methylacidiphilum infernorum (isolate V4) (Methylokorus infernorum (strain V4)).